Reading from the N-terminus, the 343-residue chain is Flavone 3'-O-methyltransferase OMT1 (343 aa).

Asn-107 provides a ligand contact to (E)-ferulate. S-adenosyl-L-homocysteine is bound by residues Gly-184, Asp-207, Asp-227, Met-228, Met-240, and Lys-241. The active-site Proton acceptor is the His-245. Residue Asp-246 participates in (E)-5-hydroxyferulate binding. Catalysis depends on residues Glu-273 and Glu-305.

This sequence belongs to the class I-like SAM-binding methyltransferase superfamily. Cation-independent O-methyltransferase family. COMT subfamily. Homodimer.

It catalyses the reaction (E)-5-hydroxyferulate + S-adenosyl-L-methionine = (E)-sinapate + S-adenosyl-L-homocysteine + H(+). The catalysed reaction is luteolin + S-adenosyl-L-methionine = chrysoeriol + S-adenosyl-L-homocysteine + H(+). The enzyme catalyses quercetin + S-adenosyl-L-methionine = isorhamnetin + S-adenosyl-L-homocysteine + H(+). It carries out the reaction (E)-caffeate + S-adenosyl-L-methionine = (E)-ferulate + S-adenosyl-L-homocysteine + H(+). It catalyses the reaction a 3'-hydroxyflavone + S-adenosyl-L-methionine = a 3'-methoxyflavone + S-adenosyl-L-homocysteine + H(+). It participates in flavonoid metabolism. Its function is as follows. Catalyzes the 3'-O-methylation of the flavonoids luteolin and quercetin. Catalyzes the 3- of 5-O-methylation of the phenylpropanoids caffeate and 5-hydroxyferulate. Substrate preference is 5-hydroxyferulate &gt; luteolin &gt; quercetin &gt; caffeate. Apigenin, kempferol and 3,4-dimethylquercetin do not seem to be substrates for methylation. In Chrysosplenium americanum (American golden saxifrage), this protein is Flavone 3'-O-methyltransferase OMT1.